The following is a 275-amino-acid chain: Ribosome biogenesis protein RLP7 (275 aa).

The tract at residues 14 to 45 (KRKNNDRKRLEKQEQARQRQLEQKKKNDQRSK) is disordered. Residues 20–44 (RKRLEKQEQARQRQLEQKKKNDQRS) show a composition bias toward basic and acidic residues.

The protein belongs to the universal ribosomal protein uL30 family.

The protein resides in the nucleus. The protein localises to the nucleolus. Its function is as follows. Involved in the biogenesis of the 60S ribosomal subunit. May act as a specificity factor that binds precursor rRNAs and tethers the enzymes that carry out the early 5' to 3' exonucleolytic reactions that generate the mature rRNAs. The chain is Ribosome biogenesis protein RLP7 (RLP7) from Debaryomyces hansenii (strain ATCC 36239 / CBS 767 / BCRC 21394 / JCM 1990 / NBRC 0083 / IGC 2968) (Yeast).